The sequence spans 263 residues: Small ribosomal subunit protein eS4, Y isoform 1 (263 aa).

One can recognise an S4 RNA-binding domain in the interval 42–104 (LPLIIFLRNR…TGEHFRLVYD (63 aa)).

This sequence belongs to the eukaryotic ribosomal protein eS4 family.

This chain is Small ribosomal subunit protein eS4, Y isoform 1 (RPS4Y1), found in Monodelphis domestica (Gray short-tailed opossum).